Consider the following 101-residue polypeptide: Urease subunit beta (101 aa).

This sequence belongs to the urease beta subunit family. Heterotrimer of UreA (gamma), UreB (beta) and UreC (alpha) subunits. Three heterotrimers associate to form the active enzyme.

Its subcellular location is the cytoplasm. It carries out the reaction urea + 2 H2O + H(+) = hydrogencarbonate + 2 NH4(+). It participates in nitrogen metabolism; urea degradation; CO(2) and NH(3) from urea (urease route): step 1/1. The sequence is that of Urease subunit beta from Actinobacillus pleuropneumoniae serotype 5b (strain L20).